The sequence spans 537 residues: Copine-1 (537 aa).

C2 domains are found at residues Met-1–Leu-114 and Gly-123–His-245. Asp-21, Asp-27, Asp-80, Asp-82, Asp-92, Asp-153, and Asp-159 together coordinate Ca(2+). Lys-171 carries the post-translational modification N6-acetyllysine. Ca(2+) contacts are provided by Asp-214, Asp-216, and Asp-222. The region spanning Asn-285–Val-505 is the VWFA domain.

The protein belongs to the copine family. Homodimer; homodimerizes via its C2 domains. Interacts with p65/RELA (via N-terminus); this interaction induces proteolytic cleavage of p65/RELA subunit and inhibition of NF-kappa-B transcriptional activity. Interacts (via VWFA domain) with ACTB, CCDC22, MYCBP2, PPP5C, RDX and UBE2O. Ca(2+) is required as a cofactor. In terms of tissue distribution, expressed in liver, spleen, muscle, testis, adrenal (at protein level).

It is found in the nucleus. Its subcellular location is the cytoplasm. The protein resides in the cell membrane. Its function is as follows. Calcium-dependent phospholipid-binding protein that plays a role in calcium-mediated intracellular processes. Involved in the TNF-alpha receptor signaling pathway in a calcium-dependent manner. Exhibits calcium-dependent phospholipid binding properties. Plays a role in neuronal progenitor cell differentiation; induces neurite outgrowth via a AKT-dependent signaling cascade and calcium-independent manner. May recruit target proteins to the cell membrane in a calcium-dependent manner. May function in membrane trafficking. Involved in TNF-alpha-induced NF-kappa-B transcriptional repression by inducing endoprotease processing of the transcription factor NF-kappa-B p65/RELA subunit. Also induces endoprotease processing of NF-kappa-B p50/NFKB1, p52/NFKB2, RELB and REL. The chain is Copine-1 from Bos taurus (Bovine).